The primary structure comprises 75 residues: ATP synthase subunit epsilon, mitochondrial (75 aa).

The transit peptide at 1 to 9 directs the protein to the mitochondrion; sequence MIRRSCALL.

It belongs to the eukaryotic ATPase epsilon family. As to quaternary structure, F-type ATPases have 2 components, F(1) - the catalytic core - and F(o) - the membrane proton channel. F(1) has five subunits: alpha(3), beta(3), gamma(1), delta(1), epsilon(1), plus the additional subunit P18 (Tb427.05.1710) that is not present in F(1)F(o) ATP synthase from metazoa. Subunit P18 (Tb927.5.1710) interacts with the alpha subunit with a 1:1 stoichiometry; the interaction is direct. Subunit gamma is part of the central stalk. F(o) has three main subunits: a, b and c. The trypanosomal ATPase complex contains additional subunits that are not present in the F(1)F(o) ATP synthase from metazoa.

Its subcellular location is the mitochondrion. It localises to the mitochondrion inner membrane. Its function is as follows. Mitochondrial membrane ATP synthase (F(1)F(o) ATP synthase) produces ATP from ADP in the presence of a proton gradient across the membrane which is generated by electron transport complexes of the respiratory chain. F-type ATPases consist of two structural domains, F(1) - containing the extramembraneous catalytic core, and F(o) - containing the membrane proton channel, linked together by a central stalk and a peripheral stalk. During catalysis, ATP synthesis in the catalytic domain of F(1) is coupled via a rotary mechanism of the central stalk subunits to proton translocation. Subunits alpha and beta form the catalytic core in F(1). Rotation of the central stalk against the surrounding alpha(3)beta(3) subunits leads to hydrolysis of ATP in three separate catalytic sites on the beta subunits. Contrary to the procyclic, insect form that requires F(1)F(o) ATP synthase for ATP synthesis, the bloodstream form relies on ATP hydrolysis by F(1)F(o) ATP synthase to maintain its mitochondrial membrane potential. This Trypanosoma brucei brucei protein is ATP synthase subunit epsilon, mitochondrial.